An 874-amino-acid chain; its full sequence is MKAAEIREKFLKFFESKGHTIVRSSSLVPGNDPTLLFTNSGMVQFKDVFLGAETRPYSRATTAQRSVRAGGKHNDLENVGYTARHHTFFEMLGNFSFGDYFKRDAIHYAWELLTSVYKLPADKLWVTVYHDDDEAYDIWAKEVGVPAERIIRIGDNKGARYASDNFWQMGDTGPCGPCSEIFYDHGPDVWGGPPGSPEEDGDRYIEIWNLVFMQFNRDAQGNMTRLPKPCVDTGMGLERIAAVLQHVHSNYEIDLFQQLIKASARETGVADLANNSLKVIADHIRACSFLIVDGVIPGNEGRGYVLRRIVRRAIRHGYKLGRKAPFFHKLVADLVAEMGAAYPELKEAEPRVTDVLRQEEERFFETIEHGMSILEAALAELDAAGGKTLDGELAFKLHDTYGFPLDLTADVCRERGVTVDEPAFDDAMARQREQARAAGKFKATQGLEYTGAKTTFHGYEEIAFDDAKVVALYVEGASVGEVKAGESAVVVLDHTPFYAESGGQVGDQGVLANAATRFAVGDTLKVQADVIGHHGELEQGTLKVGDVVRAEIDAARRARTARNHSATHLMHKALRDVLGSHVQQKGSLVDADKTRFDFAHNAPLTDDEIRRVEAIVNEQVLANAPGIVRVMPYDDAVKGGAMALFGEKYGDEVRVLDLGFSRELCGGTHVHRTGDIGLFKIVAEGGVAAGIRRVEAITGDNAVRYVQALDARVNAAAAALKAQPSELLQRIGQVQDQVKSLEKELGALKSKLASSQGDELAQQAVEVGGVHVLAATLDGADAKTLRETVDKLKDKLKSAAIVLAAVDGGKVSLIAGVTADASKKVKAGELVNFVAQQVGGKGGGRSDMAQAGGTEPAKLPAALAGVKGWVEARL.

4 residues coordinate Zn(2+): His-564, His-568, Cys-665, and His-669.

The protein belongs to the class-II aminoacyl-tRNA synthetase family. Zn(2+) is required as a cofactor.

It is found in the cytoplasm. The catalysed reaction is tRNA(Ala) + L-alanine + ATP = L-alanyl-tRNA(Ala) + AMP + diphosphate. In terms of biological role, catalyzes the attachment of alanine to tRNA(Ala) in a two-step reaction: alanine is first activated by ATP to form Ala-AMP and then transferred to the acceptor end of tRNA(Ala). Also edits incorrectly charged Ser-tRNA(Ala) and Gly-tRNA(Ala) via its editing domain. The protein is Alanine--tRNA ligase of Burkholderia mallei (strain ATCC 23344).